Reading from the N-terminus, the 151-residue chain is Large ribosomal subunit protein uL15 (151 aa).

The interval 1-51 (MPLKIEDLKPTPGSRKPKKRLGRGIGSGLGKTAGKGHKGEKARGRGKIGRT) is disordered. Residues 23 to 33 (RGIGSGLGKTA) show a composition bias toward gly residues.

Belongs to the universal ribosomal protein uL15 family. As to quaternary structure, part of the 50S ribosomal subunit.

Binds to the 23S rRNA. The sequence is that of Large ribosomal subunit protein uL15 from Petrotoga mobilis (strain DSM 10674 / SJ95).